Reading from the N-terminus, the 206-residue chain is Probable GTP-binding protein EngB (206 aa).

An EngB-type G domain is found at D7 to D195. Residues G15–S22, G41–S45, D60–G63, N140–D143, and I175–A177 contribute to the GTP site. 2 residues coordinate Mg(2+): S22 and T43.

The protein belongs to the TRAFAC class TrmE-Era-EngA-EngB-Septin-like GTPase superfamily. EngB GTPase family. Mg(2+) serves as cofactor.

Functionally, necessary for normal cell division and for the maintenance of normal septation. This chain is Probable GTP-binding protein EngB, found in Haloquadratum walsbyi (strain DSM 16790 / HBSQ001).